Here is a 302-residue protein sequence, read N- to C-terminus: MTKFIVNKNDQNQTLFKFLKKTFKTTPISVIYKWIRNKSIKINSKRVNDKNYLLKINDVVEVYDSNKPIIRDQFNYISNVNLDIVYEDNNILIVNKPNNLEMHSIYNLCLDDMVKSYLVDKKEYDIYLENSFVISHVHRLDKLTSGLVIYAKNKISSIILTNAFKTKDQINKYYYALTSYDWNLNDFLQVNGYINYNSNTQKADFSLVEKNNYKYCQTEFKLVNKNLILVKLITGKKHQIRSVLSFYNNPILNDFRYNGKKENDQKMIYLAAFKIEFKSLKKPLDYLNNKVIIKNPDWISRR.

Residues 13-89 (QTLFKFLKKT…VNLDIVYEDN (77 aa)) form the S4 RNA-binding domain. The active site involves Asp-141.

This sequence belongs to the pseudouridine synthase RluA family.

The enzyme catalyses a uridine in RNA = a pseudouridine in RNA. This is an uncharacterized protein from Mycoplasma capricolum subsp. capricolum (strain California kid / ATCC 27343 / NCTC 10154).